A 291-amino-acid polypeptide reads, in one-letter code: GCN5-related N-acetyltransferase 4, chloroplastic (291 aa).

The transit peptide at 1 to 61 directs the protein to the chloroplast; the sequence is MRSTPLGTTA…PSQINSGACN (61 aa). Residues 76–280 enclose the N-acetyltransferase domain; sequence IVVREARLED…RFTFMMKLVN (205 aa). Acetyl-CoA contacts are provided by residues 199 to 201 and 207 to 212; these read VAV and RKGIAK. N6-acetyllysine is present on Lys217. Residues 238-240 and Tyr245 each bind acetyl-CoA; that span reads NLG. Catalysis depends on Tyr245, which acts as the Proton donor. N6-acetyllysine is present on residues Lys254 and Lys265.

It belongs to the acetyltransferase family. GNAT subfamily. Oligomer. In terms of processing, autoacetylated at K-217, K-254 and K-265. In terms of tissue distribution, expressed in green tissues.

Its subcellular location is the plastid. The protein resides in the chloroplast. It carries out the reaction an N-terminal L-alpha-aminoacyl-[protein] + acetyl-CoA = N-terminal N(alpha)-acetyl-L-alpha-aminoacyl-[protein] + CoA + H(+). The enzyme catalyses L-lysyl-[protein] + acetyl-CoA = N(6)-acetyl-L-lysyl-[protein] + CoA + H(+). The catalysed reaction is N-terminal L-alanyl-[protein] + acetyl-CoA = N-terminal N(alpha)-acetyl-L-alanyl-[protein] + CoA + H(+). It catalyses the reaction N-terminal L-seryl-[protein] + acetyl-CoA = N-terminal N(alpha)-acetyl-L-seryl-[protein] + CoA + H(+). It carries out the reaction N-terminal L-threonyl-[protein] + acetyl-CoA = N-terminal N(alpha)-acetyl-L-threonyl-[protein] + CoA + H(+). The enzyme catalyses N-terminal L-methionyl-[protein] + acetyl-CoA = N-terminal N(alpha)-acetyl-L-methionyl-[protein] + CoA + H(+). The catalysed reaction is N-terminal L-valyl-[protein] + acetyl-CoA = N-terminal N(alpha)-acetyl-L-valyl-[protein] + CoA + H(+). It catalyses the reaction N-terminal glycyl-[protein] + acetyl-CoA = N-terminal N(alpha)-acetylglycyl-[protein] + CoA + H(+). Its function is as follows. Protein acetyltransferase with dual specificity triggering both N-alpha-acetylation (NTA), with a large spectrum of modified N-termini, including methionine, alanine, serine, threonine and to a lower extent glycine and valine as substrates, and epsilon-lysine acetylation (KA) of several plastid proteins. The sequence is that of GCN5-related N-acetyltransferase 4, chloroplastic from Arabidopsis thaliana (Mouse-ear cress).